The chain runs to 204 residues: NAD(P)H-quinone oxidoreductase subunit M, chloroplastic (204 aa).

Residues 1 to 27 (MASTSMSLTRACKVHAVLACSIPSVSS) constitute a chloroplast transit peptide.

The protein belongs to the NDH complex subunit M family. Part of the chloroplast NDH complex, composed of a mixture of chloroplast and nucleus encoded subunits. Component of the NDH subcomplex A, at least composed of ndhH, ndhI, ndhJ, ndhK, ndhL, ndhM, ndhN and ndhO.

It is found in the plastid. Its subcellular location is the chloroplast thylakoid membrane. It carries out the reaction a plastoquinone + NADH + (n+1) H(+)(in) = a plastoquinol + NAD(+) + n H(+)(out). The enzyme catalyses a plastoquinone + NADPH + (n+1) H(+)(in) = a plastoquinol + NADP(+) + n H(+)(out). In terms of biological role, NDH shuttles electrons from NAD(P)H:plastoquinone, via FMN and iron-sulfur (Fe-S) centers, to quinones in the photosynthetic chain and possibly in a chloroplast respiratory chain. The immediate electron acceptor for the enzyme in this species is believed to be plastoquinone. Couples the redox reaction to proton translocation, and thus conserves the redox energy in a proton gradient. In Physcomitrium patens (Spreading-leaved earth moss), this protein is NAD(P)H-quinone oxidoreductase subunit M, chloroplastic.